A 344-amino-acid polypeptide reads, in one-letter code: Glyceraldehyde-3-phosphate dehydrogenase (344 aa).

Residues 11–12 and Gly110 each bind NAD(+); that span reads TI. 139–141 contacts D-glyceraldehyde 3-phosphate; that stretch reads SCN. Residue Cys140 is the Nucleophile of the active site. An NAD(+)-binding site is contributed by Arg169. 195-196 provides a ligand contact to D-glyceraldehyde 3-phosphate; that stretch reads HG. Gln302 provides a ligand contact to NAD(+).

Belongs to the glyceraldehyde-3-phosphate dehydrogenase family. As to quaternary structure, homotetramer.

The protein resides in the cytoplasm. The catalysed reaction is D-glyceraldehyde 3-phosphate + phosphate + NADP(+) = (2R)-3-phospho-glyceroyl phosphate + NADPH + H(+). The enzyme catalyses D-glyceraldehyde 3-phosphate + phosphate + NAD(+) = (2R)-3-phospho-glyceroyl phosphate + NADH + H(+). It functions in the pathway carbohydrate degradation; glycolysis; pyruvate from D-glyceraldehyde 3-phosphate: step 1/5. The sequence is that of Glyceraldehyde-3-phosphate dehydrogenase from Pyrobaculum calidifontis (strain DSM 21063 / JCM 11548 / VA1).